Reading from the N-terminus, the 133-residue chain is Large ribosomal subunit protein bL20 (133 aa).

The protein belongs to the bacterial ribosomal protein bL20 family.

Functionally, binds directly to 23S ribosomal RNA and is necessary for the in vitro assembly process of the 50S ribosomal subunit. It is not involved in the protein synthesizing functions of that subunit. The sequence is that of Large ribosomal subunit protein bL20 from Bartonella tribocorum (strain CIP 105476 / IBS 506).